The sequence spans 51 residues: Basic phospholipase A2 homolog BmatTX-I (51 aa).

Cys28 and Cys44 form a disulfide bridge.

In terms of assembly, monomer. In terms of tissue distribution, expressed by the venom gland.

It is found in the secreted. In terms of biological role, snake venom phospholipase A2 homolog that lacks enzymatic activity. Shows high myotoxic activity, neutrophile activation (demonstrated by activation induction of IL-1beta production), slight cytotoxicity against Jurkat (leukemia T) and SK-BR-3 (breast adenocarcinoma) tumor cell lines, and slight antiparasitic activity against promastigote forms of Leishmania amazonensis. A model of myotoxic mechanism has been proposed: an apo Lys49-PLA2 is activated by the entrance of a hydrophobic molecule (e.g. fatty acid) at the hydrophobic channel of the protein leading to a reorientation of a monomer. This reorientation causes a transition between 'inactive' to 'active' states, causing alignment of C-terminal and membrane-docking sites (MDoS) side-by-side and putting the membrane-disruption sites (MDiS) in the same plane, exposed to solvent and in a symmetric position for both monomers. The MDoS region stabilizes the toxin on membrane by the interaction of charged residues with phospholipid head groups. Subsequently, the MDiS region destabilizes the membrane with penetration of hydrophobic residues. This insertion causes a disorganization of the membrane, allowing an uncontrolled influx of ions (i.e. calcium and sodium), and eventually triggering irreversible intracellular alterations and cell death. The sequence is that of Basic phospholipase A2 homolog BmatTX-I from Bothrops mattogrossensis (Pitviper).